A 258-amino-acid polypeptide reads, in one-letter code: MSAASLIPVSSLPSLASPFKGNVKTLVAKPCLCPCLKIQRTKLRVSVVNKAASAYNVKSSGENVRFRLDNLGPQPGSRKRPKRKGRGIAAGQGASCGFGMRGQKSRSGPGIMRGFEGGQMPLYRRLPKLRGIAGGMHAGLPKYVNVNLTDIENAGFQDGEEVSLETLKAKRVINPSGRERKLPLKILADGELSKKLTIKAGAFSTSAKEKLEYAGCSLIVLPGRKKWVKPSVAKNLARAEEYFAKKRGGETASEPAPV.

The N-terminal 65 residues, 1–65, are a transit peptide targeting the chloroplast; it reads MSAASLIPVS…NVKSSGENVR (65 aa). The interval 67-90 is disordered; that stretch reads RLDNLGPQPGSRKRPKRKGRGIAA. The segment covering 77–86 has biased composition (basic residues); sequence SRKRPKRKGR.

The protein belongs to the universal ribosomal protein uL15 family. In terms of assembly, part of the 50S ribosomal subunit.

It localises to the plastid. Its subcellular location is the chloroplast. This Pisum sativum (Garden pea) protein is Large ribosomal subunit protein uL15c (RPL15).